The primary structure comprises 290 residues: UBX domain-containing protein 1-B (290 aa).

One can recognise a UBA domain in the interval Met1–His42. The segment at Lys49 to Tyr210 is disordered. Basic and acidic residues-rich tracts occupy residues Pro80–Lys117 and Arg132–Arg172. The stretch at Leu81–Ala171 forms a coiled coil. Residues Pro185–Val201 show a composition bias toward low complexity. One can recognise a UBX domain in the interval Lys208 to Val287.

The protein localises to the cytoplasm. Its function is as follows. Component of a complex required to couple deglycosylation and proteasome-mediated degradation of misfolded proteins in the endoplasmic reticulum that are retrotranslocated in the cytosol. Involved in ubiquitin-proteasome systems. The polypeptide is UBX domain-containing protein 1-B (ubxn1-b) (Xenopus laevis (African clawed frog)).